The chain runs to 742 residues: Two pore calcium channel protein 1 (742 aa).

The segment at 1 to 44 (MSEAQAPLITEEAAERGLASSGSRRLSDGGGGQGSRKYRRRSDA) is disordered. Topologically, residues 1–82 (MSEAQAPLIT…NDTRFGRAMS (82 aa)) are cytoplasmic. A helical transmembrane segment spans residues 83 to 103 (FYFVYLRLDWLWSLNIFALIL). Topologically, residues 104 to 140 (LNFLEKPLWCRKDALHACDQRDMYFLGQLPYFSKTES) are extracellular. The chain crosses the membrane as a helical span at residues 141–161 (LIYEGLTLVILVMEILCPLSY). Residues 162–176 (EGLNIFWRSTTNKLK) lie on the Cytoplasmic side of the membrane. The helical transmembrane segment at 177–197 (ILLLFILACDILVFAFSSQPF) threads the bilayer. Over 198-204 (RLAPYIR) the chain is Extracellular. The chain crosses the membrane as a helical; Voltage-sensor span at residues 205–226 (VVFLIMTIRELRMCAITLAGLI). The helical transmembrane segment at 227-247 (GTYLNVLALSLLFLLFASWLA) threads the bilayer. Topologically, residues 248–258 (YVTFEDTPQGK) are extracellular. The pore-forming intramembrane region spans 259–273 (TIFSSYGVTLYQMFV). Topologically, residues 274 to 296 (LFTTSNNPDVWVPAYKISRWYSL) are extracellular. A helical membrane pass occupies residues 297–317 (FFIVYVLLGVYFLTNLILAVI). The Cytoplasmic portion of the chain corresponds to 318 to 446 (YDSFKEQFAK…SFVRSRTFEY (129 aa)). EF-hand domains lie at 335-370 (IRKN…LNKY) and 376-411 (TSRE…IAIK). Residues 447–467 (IIVFVLLINLVAVIIETTLDI) form a helical membrane-spanning segment. Residues 468–480 (ENSSSQETWQEVE) are Extracellular-facing. An N-linked (GlcNAc...) asparagine glycan is attached at Asn-469. A helical transmembrane segment spans residues 481–501 (FFLGWIYVAEMALKIFSLGFG). The Cytoplasmic segment spans residues 502–510 (AYWMEGQNK). The helical transmembrane segment at 511-531 (FDFVLTWTIFIGETLTFAFPS) threads the bilayer. The Extracellular portion of the chain corresponds to 532–540 (KLPFLSNGE). The helical; Voltage-sensor transmembrane segment at 541–558 (WIRYLLLGRVLRLTRILL) threads the bilayer. At 559-582 (QVQRFRVFVATFFTLMSSLMPYLG) the chain is on the cytoplasmic side. The chain crosses the membrane as a helical span at residues 583 to 603 (IVFCILCMYCSLGLQIFGGIV). Residues 604–627 (YAGNPTLEETDLFSNDYLLFNFND) are Extracellular-facing. Residues 628-642 (YPSGMVTLFNLLVMG) constitute an intramembrane region (pore-forming). The Extracellular segment spans residues 643–663 (NWQVWMESYWQLTGSSWSLIY). The chain crosses the membrane as a helical span at residues 664–684 (FVSFYLISILLLLNLIVAFVL). Residues 685–742 (EAFFAEMELEKGEEVDIQSPTSGGIKKRRSMRVRSKGTMVDILLHHMLSNELDGSQNS) lie on the Cytoplasmic side of the membrane.

Belongs to the calcium channel alpha-1 subunit (TC 1.A.1.11) family. Two pore calcium channel subfamily. As to quaternary structure, homodimer.

The protein localises to the membrane. With respect to regulation, inhibited by Al(3+). Functions as a voltage-gated inward-rectifying Ca(2+) channel (VDCC) across the plasma membrane that mediates sucrose-induced Ca(2+) influx in autotrophically grown leaf cells. Acts as the major ROS-responsive Ca(2+) channel and is the possible target of Al-dependent inhibition. Plays a regulatory role in defense responses. The chain is Two pore calcium channel protein 1 (TPC1) from Hordeum vulgare (Barley).